Here is a 283-residue protein sequence, read N- to C-terminus: ATP synthase gamma chain (283 aa).

This sequence belongs to the ATPase gamma chain family. F-type ATPases have 2 components, CF(1) - the catalytic core - and CF(0) - the membrane proton channel. CF(1) has five subunits: alpha(3), beta(3), gamma(1), delta(1), epsilon(1). CF(0) has three main subunits: a, b and c.

It is found in the cell membrane. Produces ATP from ADP in the presence of a proton gradient across the membrane. The gamma chain is believed to be important in regulating ATPase activity and the flow of protons through the CF(0) complex. The protein is ATP synthase gamma chain of Exiguobacterium sibiricum (strain DSM 17290 / CCUG 55495 / CIP 109462 / JCM 13490 / 255-15).